A 928-amino-acid polypeptide reads, in one-letter code: MYCBP-associated protein (928 aa).

Disordered regions lie at residues 1–38 (MKKANDRQSPPKLLEKKRAKAPEQPTPPIQEEPEPVSN) and 164–183 (EEPKPKSPKEEKRPPWAPPL). Basic and acidic residues predominate over residues 164 to 177 (EEPKPKSPKEEKRP). Ser-557 carries the post-translational modification Phosphoserine. Thr-558 is modified (phosphothreonine). A Phosphoserine modification is found at Ser-564. The segment at 786–881 (IPDEGQKSPP…SSATSQEPID (96 aa)) is disordered. The segment covering 806 to 865 (LGKEDRRGGAQEKKQLSARDKEEKKGSKTPSKEDRLNSKKQKAKDDKKVVKSTSRDRLLS) has biased composition (basic and acidic residues).

Interacts with MYCBP. As to expression, expressed in brain, retina, testis, heart and lung. Not detected in liver, kidney or intestine. In brain, highly abundant in CNS neurons of the hippocampus and cerebellum. Strongly expressed in cochlea and vestibular sensory epithelia. In both the organ of Corti and the vestibular organ, expression is restricted to hair cells.

It localises to the cytoplasm. The protein localises to the membrane. May play a role in spermatogenesis. May be involved in synaptic processes. This chain is MYCBP-associated protein, found in Rattus norvegicus (Rat).